The primary structure comprises 56 residues: Mitoregulin (56 aa).

Residues 2–9 (ADVSERTL) lie on the Mitochondrial matrix side of the membrane. A helical transmembrane segment spans residues 10–27 (QLSVLVAFASGVLLGWQA). Residues 28–56 (NRLRRRYLDWRKRRLQDKLAATQKKLDLA) are Mitochondrial intermembrane-facing.

As to quaternary structure, interacts with mitochondrial trifunctional enzyme, a heterotetrameric complex composed of 2 HADHA subunits and 2 HADHB subunits. Interacts with cytochrome b5 reductase CYB5R3; the interaction is required to maintain cellular lipid composition and leads to stimulation of mitochondrial respiratory complex I activity. Interacts with ATP synthase subunit ATP5F1B/ATP5B.

The protein localises to the mitochondrion inner membrane. In terms of biological role, positively regulates mitochondrial complex assembly and/or stability. Increases mitochondrial membrane potential while decreasing mitochondrial reactive oxygen species. Increases mitochondrial respiration rate. Increased mitochondrial respiratory activity promotes myogenic differentiation which facilitates muscle growth and regeneration. Increases mitochondrial calcium retention capacity. Plays a role in maintenance of cellular lipid composition through its interaction with cytochrome b5 reductase CYB5R3 which is required for mitochondrial respiratory complex I activity. Interacts with the mitochondrial trifunctional enzyme complex (MTE) and enhances fatty acid beta-oxidation. Not required for MTE formation or stability. Modulates triglyceride clearance in adipocytes through its role in regulating fatty acid beta-oxidation and lipolysis. In Homo sapiens (Human), this protein is Mitoregulin.